Reading from the N-terminus, the 463-residue chain is Probable glucan endo-1,3-beta-glucosidase eglC (463 aa).

The N-terminal stretch at 1–18 (MQLTHLLAFALSLATSEA) is a signal peptide. Asn84 carries an N-linked (GlcNAc...) asparagine glycan. The active-site Proton donor is Glu128. Asn183 is a glycosylation site (N-linked (GlcNAc...) asparagine). Glu239 functions as the Nucleophile in the catalytic mechanism. N-linked (GlcNAc...) asparagine glycosylation is present at Asn312. Disordered regions lie at residues 317-354 (SASA…SSAV) and 396-430 (SGSS…NSGA). A lipid anchor (GPI-anchor amidated glycine) is attached at Gly440. Positions 441 to 463 (GASSVSGSVFGALVAVFAFVATL) are cleaved as a propeptide — removed in mature form.

The protein belongs to the glycosyl hydrolase 17 family. The GPI-anchor is attached to the protein in the endoplasmic reticulum and serves to target the protein to the cell surface. There, the glucosamine-inositol phospholipid moiety is cleaved off and the GPI-modified mannoprotein is covalently attached via its lipidless GPI glycan remnant to the 1,6-beta-glucan of the outer cell wall layer.

The protein resides in the cell membrane. It localises to the secreted. The protein localises to the cell wall. The enzyme catalyses Hydrolysis of (1-&gt;3)-beta-D-glucosidic linkages in (1-&gt;3)-beta-D-glucans.. In terms of biological role, glucanases play a role in cell expansion during growth, in cell-cell fusion during mating, and in spore release during sporulation. This enzyme may be involved in beta-glucan degradation and also function biosynthetically as a transglycosylase. The chain is Probable glucan endo-1,3-beta-glucosidase eglC (eglC) from Aspergillus oryzae (strain ATCC 42149 / RIB 40) (Yellow koji mold).